The primary structure comprises 105 residues: uncharacterized protein (105 aa).

A run of 2 helical transmembrane segments spans residues 56–76 and 85–105; these read ALIW…VLII and INLN…GVFY.

The protein resides in the membrane. This is an uncharacterized protein from Aedes vexans (Inland floodwater mosquito).